A 1015-amino-acid chain; its full sequence is DNA polymerase catalytic subunit (1015 aa).

The protein belongs to the DNA polymerase type-B family. In terms of assembly, forms a complex with the major DNA-binding protein BALF2, the DNA polymerase processivity factor BMRF1, and the alkaline exonuclease BGLF5. Interacts with the putative helicase-primase complex composed of BBLF4, BSLF1 and BBLF2/3 proteins; these interactions may coordinate leading and lagging strand DNA synthesis at the replication fork.

The protein localises to the host nucleus. It catalyses the reaction DNA(n) + a 2'-deoxyribonucleoside 5'-triphosphate = DNA(n+1) + diphosphate. Its function is as follows. Replicates viral genomic DNA in the late phase of lytic infection, producing long concatemeric DNA. The replication complex is composed of six viral proteins: the DNA polymerase, processivity factor, primase, primase-associated factor, helicase, and ssDNA-binding protein. The sequence is that of DNA polymerase catalytic subunit from Homo sapiens (Human).